Reading from the N-terminus, the 682-residue chain is uncharacterized protein (682 aa).

An MCM domain is found at 284–487 (VVNILADRLI…KDKDIAEYIV (204 aa)). 329 to 336 (TDPGIGKT) serves as a coordination point for ATP.

This sequence belongs to the MCM family.

This is an uncharacterized protein from Methanocaldococcus jannaschii (strain ATCC 43067 / DSM 2661 / JAL-1 / JCM 10045 / NBRC 100440) (Methanococcus jannaschii).